The chain runs to 548 residues: MEEDLFQLRQLPVVKFCRTGESARSEDDTASGEHEVQIEGVRVGLEAVELDDGAAVPKEFANPTDDTFMVEDAVEAIGFGKFQWKLSVLTGLAWMADAMEMMILSILAPQLHCEWRLPSWQVALLTSVVFVGMMSSSTLWGNISDQYGRKTGLKISVLWTLYYGILSAFAPVYSWILVLRGLVGFGIGGVPQSVTLYAEFLPMKARAKCILLIEVFWAIGTVFEVVLAVFVMPSLGWRWLLILSAVPLLLFAVLCFWLPESARYDVLSGNQEKAIATLKRIATENGAPMPLGKLIISRQEDRGKMRDLFTPHFRWTTLLLWFIWFSNAFSYYGLVLLTTELFQAGDVCGISSRKKAVEAKCSLACEYLSEEDYMDLLWTTLSEFPGVLVTLWIIDRLGRKKTMALCFVIFSFCSLLLFICVGRNVLTLLLFIARAFISGGFQAAYVYTPEVYPTATRALGLGTCSGMARVGALITPFIAQVMLESSVYLTLAVYSGCCLLAALASCFLPIETKGRGLQESSHREWGQEMVGRGMHGADVTRSNSGSQE.

Over methionine 1 to serine 87 the chain is Cytoplasmic. Phosphoserine occurs at positions 25 and 31. The helical transmembrane segment at valine 88–alanine 108 threads the bilayer. At proline 109–valine 122 the chain is on the vesicular side. A helical transmembrane segment spans residues alanine 123–isoleucine 143. The Cytoplasmic portion of the chain corresponds to serine 144–serine 156. A helical membrane pass occupies residues valine 157–leucine 177. The Vesicular portion of the chain corresponds to valine 178–arginine 180. A helical transmembrane segment spans residues glycine 181 to leucine 201. The Cytoplasmic segment spans residues proline 202–cysteine 209. A helical membrane pass occupies residues isoleucine 210–phenylalanine 230. Residues valine 231–arginine 238 are Vesicular-facing. The helical transmembrane segment at tryptophan 239–proline 259 threads the bilayer. Residues glutamate 260–threonine 316 are Cytoplasmic-facing. Residues threonine 317–leucine 337 traverse the membrane as a helical segment. The Vesicular portion of the chain corresponds to threonine 338 to tyrosine 373. A helical membrane pass occupies residues methionine 374 to isoleucine 394. The Cytoplasmic segment spans residues aspartate 395–lysine 401. The helical transmembrane segment at threonine 402–glycine 422 threads the bilayer. Over arginine 423–asparagine 424 the chain is Vesicular. The helical transmembrane segment at valine 425–tyrosine 445 threads the bilayer. Residues valine 446–arginine 457 are Cytoplasmic-facing. The helical transmembrane segment at alanine 458–isoleucine 478 threads the bilayer. Residues alanine 479–leucine 489 are Vesicular-facing. Residues threonine 490–isoleucine 510 form a helical membrane-spanning segment. Topologically, residues glutamate 511 to glutamate 548 are cytoplasmic. Serine 542 carries the phosphoserine modification.

This sequence belongs to the major facilitator superfamily.

It is found in the cytoplasmic vesicle. The protein resides in the secretory vesicle. The protein localises to the synaptic vesicle membrane. The polypeptide is Synaptic vesicle 2-related protein (SVOP) (Pongo abelii (Sumatran orangutan)).